A 449-amino-acid polypeptide reads, in one-letter code: tRNA-2-methylthio-N(6)-dimethylallyladenosine synthase (449 aa).

The MTTase N-terminal domain maps to 3 to 118 (KKVFVKTFGC…LPELLAQREA (116 aa)). [4Fe-4S] cluster is bound by residues Cys12, Cys49, Cys81, Cys155, Cys159, and Cys162. The Radical SAM core domain maps to 141-376 (RVEGASAFVS…VINANIKSIS (236 aa)). In terms of domain architecture, TRAM spans 377–440 (ESRVGTVQRI…AYTLRGEVVT (64 aa)).

The protein belongs to the methylthiotransferase family. MiaB subfamily. As to quaternary structure, monomer. [4Fe-4S] cluster serves as cofactor.

The protein resides in the cytoplasm. It carries out the reaction N(6)-dimethylallyladenosine(37) in tRNA + (sulfur carrier)-SH + AH2 + 2 S-adenosyl-L-methionine = 2-methylsulfanyl-N(6)-dimethylallyladenosine(37) in tRNA + (sulfur carrier)-H + 5'-deoxyadenosine + L-methionine + A + S-adenosyl-L-homocysteine + 2 H(+). Functionally, catalyzes the methylthiolation of N6-(dimethylallyl)adenosine (i(6)A), leading to the formation of 2-methylthio-N6-(dimethylallyl)adenosine (ms(2)i(6)A) at position 37 in tRNAs that read codons beginning with uridine. The protein is tRNA-2-methylthio-N(6)-dimethylallyladenosine synthase of Paracidovorax citrulli (strain AAC00-1) (Acidovorax citrulli).